The primary structure comprises 303 residues: Aspartate carbamoyltransferase catalytic subunit (303 aa).

Carbamoyl phosphate-binding residues include Arg54 and Thr55. L-aspartate is bound at residue Lys82. Carbamoyl phosphate-binding residues include Arg104, His132, and Gln135. 2 residues coordinate L-aspartate: Arg165 and Arg221. 2 residues coordinate carbamoyl phosphate: Gly261 and Pro262.

Belongs to the aspartate/ornithine carbamoyltransferase superfamily. ATCase family. As to quaternary structure, heterododecamer (2C3:3R2) of six catalytic PyrB chains organized as two trimers (C3), and six regulatory PyrI chains organized as three dimers (R2).

It catalyses the reaction carbamoyl phosphate + L-aspartate = N-carbamoyl-L-aspartate + phosphate + H(+). It participates in pyrimidine metabolism; UMP biosynthesis via de novo pathway; (S)-dihydroorotate from bicarbonate: step 2/3. Catalyzes the condensation of carbamoyl phosphate and aspartate to form carbamoyl aspartate and inorganic phosphate, the committed step in the de novo pyrimidine nucleotide biosynthesis pathway. This is Aspartate carbamoyltransferase catalytic subunit from Koribacter versatilis (strain Ellin345).